Here is a 172-residue protein sequence, read N- to C-terminus: Small ribosomal subunit protein uS5 (172 aa).

An S5 DRBM domain is found at 16 to 79 (LKEKLVHINR…EDGKKNVIKV (64 aa)).

It belongs to the universal ribosomal protein uS5 family. In terms of assembly, part of the 30S ribosomal subunit. Contacts proteins S4 and S8.

Functionally, with S4 and S12 plays an important role in translational accuracy. Its function is as follows. Located at the back of the 30S subunit body where it stabilizes the conformation of the head with respect to the body. The polypeptide is Small ribosomal subunit protein uS5 (Chlorobium phaeobacteroides (strain DSM 266 / SMG 266 / 2430)).